A 443-amino-acid polypeptide reads, in one-letter code: Ribosomal protein uS12 methylthiotransferase RimO (443 aa).

Positions 5-115 constitute an MTTase N-terminal domain; it reads PNIGFISLGC…VMQHVHKYVP (111 aa). [4Fe-4S] cluster contacts are provided by cysteine 14, cysteine 50, cysteine 79, cysteine 147, cysteine 151, and cysteine 154. The Radical SAM core domain maps to 133-374; sequence LTPKHYAYLK…MQVQQRISVA (242 aa). A TRAM domain is found at 377-443; it reads QQKIGKTLAI…ADEYDLWGTY (67 aa).

It belongs to the methylthiotransferase family. RimO subfamily. The cofactor is [4Fe-4S] cluster.

It is found in the cytoplasm. It catalyses the reaction L-aspartate(89)-[ribosomal protein uS12]-hydrogen + (sulfur carrier)-SH + AH2 + 2 S-adenosyl-L-methionine = 3-methylsulfanyl-L-aspartate(89)-[ribosomal protein uS12]-hydrogen + (sulfur carrier)-H + 5'-deoxyadenosine + L-methionine + A + S-adenosyl-L-homocysteine + 2 H(+). Catalyzes the methylthiolation of an aspartic acid residue of ribosomal protein uS12. This chain is Ribosomal protein uS12 methylthiotransferase RimO, found in Haemophilus ducreyi (strain 35000HP / ATCC 700724).